A 275-amino-acid polypeptide reads, in one-letter code: Dermonecrotic toxin SpeSicTox-betaIIA1 (275 aa).

The active site involves histidine 5. Mg(2+) contacts are provided by glutamate 25 and aspartate 27. The Nucleophile role is filled by histidine 41. Disulfide bonds link cysteine 45–cysteine 51 and cysteine 47–cysteine 190. A Mg(2+)-binding site is contributed by aspartate 85.

It belongs to the arthropod phospholipase D family. Class II subfamily. Mg(2+) is required as a cofactor. As to expression, expressed by the venom gland.

It localises to the secreted. It carries out the reaction an N-(acyl)-sphingosylphosphocholine = an N-(acyl)-sphingosyl-1,3-cyclic phosphate + choline. The catalysed reaction is an N-(acyl)-sphingosylphosphoethanolamine = an N-(acyl)-sphingosyl-1,3-cyclic phosphate + ethanolamine. It catalyses the reaction a 1-acyl-sn-glycero-3-phosphocholine = a 1-acyl-sn-glycero-2,3-cyclic phosphate + choline. The enzyme catalyses a 1-acyl-sn-glycero-3-phosphoethanolamine = a 1-acyl-sn-glycero-2,3-cyclic phosphate + ethanolamine. In terms of biological role, dermonecrotic toxins cleave the phosphodiester linkage between the phosphate and headgroup of certain phospholipids (sphingolipid and lysolipid substrates), forming an alcohol (often choline) and a cyclic phosphate. This toxin acts on sphingomyelin (SM). It may also act on ceramide phosphoethanolamine (CPE), lysophosphatidylcholine (LPC) and lysophosphatidylethanolamine (LPE), but not on lysophosphatidylserine (LPS), and lysophosphatidylglycerol (LPG). It acts by transphosphatidylation, releasing exclusively cyclic phosphate products as second products. Induces dermonecrosis, hemolysis, increased vascular permeability, edema, inflammatory response, and platelet aggregation. In Sicarius peruensis (Six-eyed sand spider), this protein is Dermonecrotic toxin SpeSicTox-betaIIA1.